Consider the following 329-residue polypeptide: Adenylate isopentenyltransferase 7, mitochondrial (329 aa).

The transit peptide at 1-40 directs the protein to the mitochondrion; sequence MKFSISSLKQVQPILCFKNKLSKVNVNSFLHPKEKVIFVM. 41–48 is an ATP binding site; sequence GATGSGKS.

Belongs to the IPP transferase family. As to expression, expressed in both the vascular stele and the phloem companion cells of the root, in endodermis of the root elongation zone, trichomes on young leaves, and some pollen tubes.

Its subcellular location is the mitochondrion. The catalysed reaction is dimethylallyl diphosphate + ADP = N(6)-(dimethylallyl)adenosine 5'-diphosphate + diphosphate. It catalyses the reaction dimethylallyl diphosphate + ATP = N(6)-(dimethylallyl)adenosine 5'-triphosphate + diphosphate. Functionally, involved in cytokinin biosynthesis. Catalyzes the transfer of an isopentenyl group from dimethylallyl diphosphate (DMAPP) to ATP and ADP. The chain is Adenylate isopentenyltransferase 7, mitochondrial (IPT7) from Arabidopsis thaliana (Mouse-ear cress).